Here is a 1052-residue protein sequence, read N- to C-terminus: Mediator of RNA polymerase II transcription subunit 5 (1052 aa).

The segment at 949 to 982 is disordered; that stretch reads GGDDEQREQHQQQQPDADQSNQGVVAPTGNTPGN. A compositionally biased stretch (low complexity) spans 959–970; sequence QQQQPDADQSNQ.

It belongs to the Mediator complex subunit 5 family. Component of the Mediator complex.

It is found in the nucleus. Component of the Mediator complex, a coactivator involved in the regulated transcription of nearly all RNA polymerase II-dependent genes. Mediator functions as a bridge to convey information from gene-specific regulatory proteins to the basal RNA polymerase II transcription machinery. Mediator is recruited to promoters by direct interactions with regulatory proteins and serves as a scaffold for the assembly of a functional preinitiation complex with RNA polymerase II and the general transcription factors. The sequence is that of Mediator of RNA polymerase II transcription subunit 5 (NUT1) from Coccidioides immitis (strain RS) (Valley fever fungus).